Reading from the N-terminus, the 325-residue chain is Glycerol-3-phosphate dehydrogenase [NAD(P)+] (325 aa).

NADPH-binding residues include serine 14, phenylalanine 15, arginine 35, and lysine 109. Lysine 109 and glycine 137 together coordinate sn-glycerol 3-phosphate. Alanine 141 lines the NADPH pocket. Residues lysine 192, aspartate 247, serine 257, arginine 258, and asparagine 259 each contribute to the sn-glycerol 3-phosphate site. The active-site Proton acceptor is the lysine 192. Arginine 258 is an NADPH binding site. The NADPH site is built by leucine 282 and glutamate 284.

It belongs to the NAD-dependent glycerol-3-phosphate dehydrogenase family.

It is found in the cytoplasm. The catalysed reaction is sn-glycerol 3-phosphate + NAD(+) = dihydroxyacetone phosphate + NADH + H(+). It carries out the reaction sn-glycerol 3-phosphate + NADP(+) = dihydroxyacetone phosphate + NADPH + H(+). It functions in the pathway membrane lipid metabolism; glycerophospholipid metabolism. Its function is as follows. Catalyzes the reduction of the glycolytic intermediate dihydroxyacetone phosphate (DHAP) to sn-glycerol 3-phosphate (G3P), the key precursor for phospholipid synthesis. The polypeptide is Glycerol-3-phosphate dehydrogenase [NAD(P)+] (Rickettsia conorii (strain ATCC VR-613 / Malish 7)).